The chain runs to 869 residues: Retrovirus-related Pol polyprotein from type-1 retrotransposable element R2 (869 aa).

The Reverse transcriptase domain maps to 199-475 (IFVFYGRVPS…DLWKYLGVVY (277 aa)). A nucleic acid-binding endonuclease region spans residues 601-869 (LYASISHSCK…FNNVTTVVHW (269 aa)).

The catalysed reaction is DNA(n) + a 2'-deoxyribonucleoside 5'-triphosphate = DNA(n+1) + diphosphate. This Bradysia coprophila (Dark-winged fungus gnat) protein is Retrovirus-related Pol polyprotein from type-1 retrotransposable element R2.